Reading from the N-terminus, the 412-residue chain is Stachydrine N-demethylase (412 aa).

Residues 45–150 (LYAVPVCQLA…LRNLDGLIYI (106 aa)) enclose the Rieske domain. 4 residues coordinate [2Fe-2S] cluster: C86, H88, C106, and H109. Positions 204, 209, and 360 each coordinate Fe cation.

This sequence belongs to the bacterial ring-hydroxylating dioxygenase alpha subunit family. In terms of assembly, homotrimer. The system is probably composed of an oxygenase subunit (Stc2) and two reductase subunits (Stc3 and Stc4). [2Fe-2S] cluster serves as cofactor. The cofactor is Fe cation.

The enzyme catalyses L-proline betaine + NADH + O2 + H(+) = N-methyl-L-proline + formaldehyde + NAD(+) + H2O. It catalyses the reaction L-proline betaine + NADPH + O2 + H(+) = N-methyl-L-proline + formaldehyde + NADP(+) + H2O. In terms of biological role, monooxygenase involved in the catabolism of stachydrine (L-proline betaine), a source of carbon and nitrogen. Part of a Rieske-type oxygenase system that catalyzes the demethylation of stachydrine to produce N-methyl-L-proline (monomethylproline). Stc2 is the catalytic subunit. The chain is Stachydrine N-demethylase from Rhizobium meliloti (strain 1021) (Ensifer meliloti).